Here is a 1357-residue protein sequence, read N- to C-terminus: DNA-directed RNA polymerase subunit beta (1357 aa).

The protein belongs to the RNA polymerase beta chain family. As to quaternary structure, the RNAP catalytic core consists of 2 alpha, 1 beta, 1 beta' and 1 omega subunit. When a sigma factor is associated with the core the holoenzyme is formed, which can initiate transcription.

The enzyme catalyses RNA(n) + a ribonucleoside 5'-triphosphate = RNA(n+1) + diphosphate. Its function is as follows. DNA-dependent RNA polymerase catalyzes the transcription of DNA into RNA using the four ribonucleoside triphosphates as substrates. The chain is DNA-directed RNA polymerase subunit beta from Hahella chejuensis (strain KCTC 2396).